We begin with the raw amino-acid sequence, 321 residues long: MIYVLAIIAFLITLILVPILIPTLKRMKFGQSIREEGPQSHMKKTGTPTMGGLTFLISIIITTIIAIIFSDNANPYILLLFVTVGFGLIGFVDDYIIVVKKNNQGLTSKQKFLAQIAIAVIFFILSDVFNMIHFATGIHIPFTNVSIPLSVVYVVFIVFWQVGFSNAVNLTDGLDGLATGLSIIAFAMYAIMSFMLGNNAVGTFCIIMVFALLGFLIYNVNPAKVFMGDTGSLALGGIIATVSIMLNAEISLIFIGFVFVAETLSVILQVASFKLTGKRIFKMSPLHHHFELSGWNEWKVVSVFWIVGLITGLIGLWIGVH.

A run of 10 helical transmembrane segments spans residues 1–21, 49–69, 77–97, 112–132, 140–160, 176–196, 200–220, 225–245, 250–270, and 300–320; these read MIYV…PILI, TMGG…AIIF, ILLL…DYII, FLAQ…FNMI, IPFT…IVFW, GLAT…SFML, AVGT…IYNV, VFMG…VSIM, ISLI…ILQV, and VVSV…WIGV.

This sequence belongs to the glycosyltransferase 4 family. MraY subfamily. The cofactor is Mg(2+).

The protein resides in the cell membrane. It carries out the reaction UDP-N-acetyl-alpha-D-muramoyl-L-alanyl-gamma-D-glutamyl-L-lysyl-D-alanyl-D-alanine + di-trans,octa-cis-undecaprenyl phosphate = Mur2Ac(oyl-L-Ala-gamma-D-Glu-L-Lys-D-Ala-D-Ala)-di-trans,octa-cis-undecaprenyl diphosphate + UMP. It participates in cell wall biogenesis; peptidoglycan biosynthesis. In terms of biological role, catalyzes the initial step of the lipid cycle reactions in the biosynthesis of the cell wall peptidoglycan: transfers peptidoglycan precursor phospho-MurNAc-pentapeptide from UDP-MurNAc-pentapeptide onto the lipid carrier undecaprenyl phosphate, yielding undecaprenyl-pyrophosphoryl-MurNAc-pentapeptide, known as lipid I. The protein is Phospho-N-acetylmuramoyl-pentapeptide-transferase of Staphylococcus carnosus (strain TM300).